We begin with the raw amino-acid sequence, 341 residues long: MLTYFHPDQSLHHPRTYFSRGRMRMPQEVPERAARLVAAAFAMGFPVREPDDFGIAPIAAVHDTHYLRFLETVHREWKAMPEDWGDEAMSNIFVREPNALRGVLAQAARHLADGSCPVGEHTWRAAYWSAQSALAAAAAVRDGAPAAYALCRPPGHHARVDAAGGFCYLNNAAIAAQALRARHARVAVLDTDMHHGQGIQEIFYARRDVLYVSIHGDPTNFYPAVAGFDDERGAGEGLGYNVNLPMPHGSSEAAFFERVDDALRELRRFAPDALVLSLGFDVYRDDPQSQVAVTTDGFGRLGHLIGALRLPTVIVQEGGYHIESLEANARSFFGGFGALRG.

Histidine 157 serves as the catalytic Proton donor/acceptor. Zn(2+) is bound by residues aspartate 192, histidine 194, and aspartate 281.

It belongs to the histone deacetylase family. As to quaternary structure, homodimer. Zn(2+) serves as cofactor.

The enzyme catalyses N-acetylputrescine + H2O = putrescine + acetate. It catalyses the reaction N-acetylcadaverine + H2O = cadaverine + acetate. It functions in the pathway amine and polyamine metabolism. Its function is as follows. Involved in polyamine metabolism. Catalyzes the deacetylation of various acetylated polyamines such as N-acetylputrescine and N-acetylcadaverine. This Burkholderia pseudomallei (strain 1710b) protein is Acetylpolyamine amidohydrolase.